Reading from the N-terminus, the 199-residue chain is Prolactin-1 (199 aa).

3 cysteine pairs are disulfide-bonded: Cys4–Cys11, Cys58–Cys174, and Cys191–Cys199. N-linked (GlcNAc...) asparagine glycosylation is present at Asn60.

The protein belongs to the somatotropin/prolactin family. Glycosylated.

The protein localises to the secreted. This is Prolactin-1 from Alligator mississippiensis (American alligator).